Consider the following 223-residue polypeptide: Deoxyribose-phosphate aldolase 1 (223 aa).

Asp-91 serves as the catalytic Proton donor/acceptor. Lys-153 acts as the Schiff-base intermediate with acetaldehyde in catalysis. Catalysis depends on Lys-182, which acts as the Proton donor/acceptor.

The protein belongs to the DeoC/FbaB aldolase family. DeoC type 1 subfamily.

The protein resides in the cytoplasm. It catalyses the reaction 2-deoxy-D-ribose 5-phosphate = D-glyceraldehyde 3-phosphate + acetaldehyde. Its pathway is carbohydrate degradation; 2-deoxy-D-ribose 1-phosphate degradation; D-glyceraldehyde 3-phosphate and acetaldehyde from 2-deoxy-alpha-D-ribose 1-phosphate: step 2/2. Catalyzes a reversible aldol reaction between acetaldehyde and D-glyceraldehyde 3-phosphate to generate 2-deoxy-D-ribose 5-phosphate. This Yersinia pestis protein is Deoxyribose-phosphate aldolase 1.